A 100-amino-acid chain; its full sequence is C-X-C motif chemokine 3 (100 aa).

The first 31 residues, methionine 1–alanine 31, serve as a signal peptide directing secretion. 2 disulfides stabilise this stretch: cysteine 36–cysteine 62 and cysteine 38–cysteine 78.

It belongs to the intercrine alpha (chemokine CxC) family.

The protein localises to the secreted. Ligand for CXCR2. Has chemotactic activity for neutrophils. May play a role in inflammation and exert its effects on endothelial cells in an autocrine fashion. This Mus musculus (Mouse) protein is C-X-C motif chemokine 3.